The sequence spans 275 residues: uncharacterized protein (275 aa).

Mg(2+) is bound by residues glutamate 71, aspartate 85, isoleucine 87, and aspartate 88. A substrate-binding site is contributed by glutamate 71. Position 87-90 (isoleucine 87–threonine 90) interacts with substrate. 3 consecutive transmembrane segments (helical) span residues isoleucine 87–valine 107, proline 112–glycine 132, and isoleucine 178–glycine 198. Aspartate 208 lines the Mg(2+) pocket. Aspartate 208 is a binding site for substrate.

The protein belongs to the inositol monophosphatase superfamily.

Its subcellular location is the cell membrane. This is an uncharacterized protein from Sinorhizobium fredii (strain NBRC 101917 / NGR234).